We begin with the raw amino-acid sequence, 325 residues long: Elongation factor P--(R)-beta-lysine ligase (325 aa).

Residue 76-78 (SPE) participates in substrate binding. ATP-binding positions include 100-102 (RNE) and N109. Position 118 (Y118) interacts with substrate. 244–245 (EL) lines the ATP pocket. E251 contributes to the substrate binding site. G300 contacts ATP.

It belongs to the class-II aminoacyl-tRNA synthetase family. EpmA subfamily. In terms of assembly, homodimer.

The enzyme catalyses D-beta-lysine + L-lysyl-[protein] + ATP = N(6)-((3R)-3,6-diaminohexanoyl)-L-lysyl-[protein] + AMP + diphosphate + H(+). Its function is as follows. With EpmB is involved in the beta-lysylation step of the post-translational modification of translation elongation factor P (EF-P) on 'Lys-34'. Catalyzes the ATP-dependent activation of (R)-beta-lysine produced by EpmB, forming a lysyl-adenylate, from which the beta-lysyl moiety is then transferred to the epsilon-amino group of EF-P 'Lys-34'. The polypeptide is Elongation factor P--(R)-beta-lysine ligase (Salmonella gallinarum (strain 287/91 / NCTC 13346)).